The primary structure comprises 481 residues: Keratin, type I cytoskeletal 39 (481 aa).

The segment at 1–25 (MDTKGSTVTISSSTPPQNCSGNTNV) is disordered. The segment at 1-90 (MDTKGSTVTI…RCSDGINSHE (90 aa)) is head. The IF rod domain occupies 90–401 (EKETMQILNE…SLLESLDGRL (312 aa)). Positions 91–125 (KETMQILNERLASYLEKVRMLEGENADLEDKIQEE) are coil 1A. Residues 126 to 136 (CSKTLPILCPD) are linker 1. Positions 137-237 (YLSYYTTIEQ…HEEEINSLQC (101 aa)) are coil 1B. The interval 238–253 (QLGDRINIEVTAAPSV) is linker 12. The coil 2 stretch occupies residues 254–397 (DLNQILQKMR…ATYRSLLESL (144 aa)). The segment at 398–481 (DGRLPCNPCT…PCYITRPAKV (84 aa)) is tail.

Belongs to the intermediate filament family. In terms of assembly, heterotetramer of two type I and two type II keratins.

In terms of biological role, may play a role in late hair differentiation. The chain is Keratin, type I cytoskeletal 39 (Krt39) from Rattus norvegicus (Rat).